Here is a 361-residue protein sequence, read N- to C-terminus: Mitogen-activated protein kinase 14 (361 aa).

The Protein kinase domain maps to 32 to 316 (YVPIKPIGRG…VSDALLHPYM (285 aa)). ATP is bound by residues 38–46 (IGRGAYGVV) and Lys61. Asp158 (proton acceptor) is an active-site residue. At Thr188 the chain carries Phosphothreonine. The TXY motif lies at 188–190 (TEY). Tyr190 carries the post-translational modification Phosphotyrosine. Thr193 bears the Phosphothreonine mark.

This sequence belongs to the protein kinase superfamily. CMGC Ser/Thr protein kinase family. MAP kinase subfamily. In terms of assembly, interacts with MKK3. Dually phosphorylated on Thr-188 and Tyr-190, which activates the enzyme.

It catalyses the reaction L-seryl-[protein] + ATP = O-phospho-L-seryl-[protein] + ADP + H(+). It carries out the reaction L-threonyl-[protein] + ATP = O-phospho-L-threonyl-[protein] + ADP + H(+). Activated by threonine and tyrosine phosphorylation. This chain is Mitogen-activated protein kinase 14 (MPK14), found in Arabidopsis thaliana (Mouse-ear cress).